Reading from the N-terminus, the 562-residue chain is Isochorismate synthase 2, chloroplastic (562 aa).

A chloroplast-targeting transit peptide spans 1–55; that stretch reads MASLQCSFHFLGTNPKKYNPSSIFQSYSRTSFTKLSSRVSRQRFLRCTLSMNGCE.

It belongs to the isochorismate synthase family. Mg(2+) serves as cofactor.

Its subcellular location is the plastid. The protein localises to the chloroplast. The catalysed reaction is chorismate = isochorismate. It participates in siderophore biosynthesis; salicylate biosynthesis. Functionally, isochorismate synthase involved in the synthesis of salicylic acid (SA) required for both local and systemic acquired resistance (LAR and SAR) while SA synthesized through the phenylalanine ammonium lyase (PAL) pathway seems to potentiate plant cell death. Also involved in phylloquinone (vitamin K1) synthesis. Has no isochorismate pyruvate lyase (IPL) activity. The protein is Isochorismate synthase 2, chloroplastic (ICS2) of Arabidopsis thaliana (Mouse-ear cress).